The sequence spans 96 residues: Acylphosphatase (96 aa).

The Acylphosphatase-like domain occupies 11-96; sequence ARRWYVRGRV…ITSYDSFRIR (86 aa). Residues arginine 26 and asparagine 44 contribute to the active site.

It belongs to the acylphosphatase family.

It catalyses the reaction an acyl phosphate + H2O = a carboxylate + phosphate + H(+). This Solibacter usitatus (strain Ellin6076) protein is Acylphosphatase (acyP).